Here is a 327-residue protein sequence, read N- to C-terminus: MSNNLSIIGAGAWGSALSIALYDNFDTIYLHTHTQADIKKLKSKHSALSIPYPYNVKIAYDLYKLQDSKNIIITTPSYAFSEILEKIKPFINHTHKIAWGTKGFDTTKRCFLYESFKRLFPNRNGCVISGPSFAFEVALNKPTALVVASIDENTRNHFAKLIQTNTLRTYTNADIIGVEVGGSVKNILAIAAGIASGLKYGFNTQAALIARGLSEMSRLGKSLGAKNSTFIGLSGLGDLVLTCSDNLSRNRRFGQELVNNHNIKNALINVGGTVEGLNTLDLILSIANKKQVEMPICEQVYQITQGKITPAEAVNYLMSREQQQNNE.

NADPH-binding residues include Trp13, His33, and Lys102. Sn-glycerol 3-phosphate contacts are provided by Lys102, Gly130, and Ser132. An NADPH-binding site is contributed by Ala134. Sn-glycerol 3-phosphate is bound by residues Lys185, Asp238, Ser248, Arg249, and Asn250. Lys185 serves as the catalytic Proton acceptor. Arg249 is a binding site for NADPH. Glu275 is an NADPH binding site.

This sequence belongs to the NAD-dependent glycerol-3-phosphate dehydrogenase family.

It is found in the cytoplasm. The enzyme catalyses sn-glycerol 3-phosphate + NAD(+) = dihydroxyacetone phosphate + NADH + H(+). The catalysed reaction is sn-glycerol 3-phosphate + NADP(+) = dihydroxyacetone phosphate + NADPH + H(+). Its pathway is membrane lipid metabolism; glycerophospholipid metabolism. Its function is as follows. Catalyzes the reduction of the glycolytic intermediate dihydroxyacetone phosphate (DHAP) to sn-glycerol 3-phosphate (G3P), the key precursor for phospholipid synthesis. This is Glycerol-3-phosphate dehydrogenase [NAD(P)+] from Vesicomyosocius okutanii subsp. Calyptogena okutanii (strain HA).